A 66-amino-acid chain; its full sequence is Large ribosomal subunit protein bL33c (66 aa).

It belongs to the bacterial ribosomal protein bL33 family.

It is found in the plastid. The protein resides in the chloroplast. This is Large ribosomal subunit protein bL33c from Lepidium virginicum (Virginia pepperweed).